Reading from the N-terminus, the 308-residue chain is Ectoine dioxygenase (308 aa).

Residue Gln131 coordinates L-ectoine. Residue Lys137 coordinates 2-oxoglutarate. Fe cation-binding residues include His148, Asp150, and His249.

This sequence belongs to the PhyH family. EctD subfamily. As to quaternary structure, homodimer. Fe(2+) is required as a cofactor.

It catalyses the reaction L-ectoine + 2-oxoglutarate + O2 = 5-hydroxyectoine + succinate + CO2. Involved in the biosynthesis of 5-hydroxyectoine, called compatible solute, which helps organisms to survive extreme osmotic stress by acting as a highly soluble organic osmolyte. Catalyzes the 2-oxoglutarate-dependent selective hydroxylation of L-ectoine to yield (4S,5S)-5-hydroxyectoine. The chain is Ectoine dioxygenase from Bordetella bronchiseptica (strain ATCC BAA-588 / NCTC 13252 / RB50) (Alcaligenes bronchisepticus).